The sequence spans 109 residues: Parvalbumin beta (109 aa).

Position 2 is an N-acetylalanine (Ala2). An igE-binding region spans residues Ala22–Thr41. EF-hand domains lie at Lys39–Gly74 and Leu78–Gly109. Ca(2+)-binding residues include Asp52, Asp54, Ser56, Phe58, Glu60, Glu63, Asp91, Asp93, Asp95, Lys97, and Glu102.

It belongs to the parvalbumin family. Post-translationally, the N-terminus is blocked. As to expression, expressed in both white and dark muscles (at protein level). About eight and a half times lower expression in the dark muscle than in the white muscle (at protein level).

In terms of biological role, in muscle, parvalbumin is thought to be involved in relaxation after contraction. It binds two calcium ions. The chain is Parvalbumin beta from Scomber japonicus (Chub mackerel).